Consider the following 427-residue polypeptide: Serine--tRNA ligase (427 aa).

236 to 238 provides a ligand contact to L-serine; that stretch reads TAE. Position 267–269 (267–269) interacts with ATP; the sequence is RRE. Position 290 (Glu-290) interacts with L-serine. 354–357 serves as a coordination point for ATP; the sequence is EISS. Ser-390 serves as a coordination point for L-serine.

The protein belongs to the class-II aminoacyl-tRNA synthetase family. Type-1 seryl-tRNA synthetase subfamily. Homodimer. The tRNA molecule binds across the dimer.

It localises to the cytoplasm. The enzyme catalyses tRNA(Ser) + L-serine + ATP = L-seryl-tRNA(Ser) + AMP + diphosphate + H(+). It carries out the reaction tRNA(Sec) + L-serine + ATP = L-seryl-tRNA(Sec) + AMP + diphosphate + H(+). It participates in aminoacyl-tRNA biosynthesis; selenocysteinyl-tRNA(Sec) biosynthesis; L-seryl-tRNA(Sec) from L-serine and tRNA(Sec): step 1/1. Its function is as follows. Catalyzes the attachment of serine to tRNA(Ser). Is also able to aminoacylate tRNA(Sec) with serine, to form the misacylated tRNA L-seryl-tRNA(Sec), which will be further converted into selenocysteinyl-tRNA(Sec). This is Serine--tRNA ligase from Picosynechococcus sp. (strain ATCC 27264 / PCC 7002 / PR-6) (Agmenellum quadruplicatum).